A 1249-amino-acid polypeptide reads, in one-letter code: Protein transport protein Sec31A (1249 aa).

WD repeat units follow at residues 4–47, 64–111, 120–160, 166–206, 209–254, 258–298, and 301–342; these read KEID…EIFE, SSSH…AGDK, KHTG…TPMT, QPPE…PIIK, DHSN…SPLR, NHAR…VLYE, and TNTQ…DGLR. The interval 161-470 is interaction with SEC13; it reads PGAKTQPPED…IDASQTDFEK (310 aa). The WD 8; interaction with SEC13 repeat unit spans residues 397 to 429; it reads SFSFGGKLVTFENVTGQPQQGAEQPRRQPVFIS. R423 is modified (asymmetric dimethylarginine). S526 and S531 each carry phosphoserine. K647 participates in a covalent cross-link: Glycyl lysine isopeptide (Lys-Gly) (interchain with G-Cter in ubiquitin). Disordered regions lie at residues 790–829, 842–940, and 954–1123; these read QGRS…VQSQ, TTWS…RYPN, and PHMY…PIGN. Polar residues predominate over residues 796-805; the sequence is GQESSRSSYE. S799 is modified (phosphoserine). The tract at residues 800–1142 is interaction with PDCD6; the sequence is SRSSYEGQPL…TEKITKKPIP (343 aa). The short motif at 873-879 is the ALG-2-binding site motif-2 (ABS-2) element; that stretch reads GFIMHGN. Residues 898 to 908 are compositionally biased toward pro residues; the sequence is QPPPYPQPQPY. Composition is skewed to low complexity over residues 961-970 and 991-1007; these read PASSPTSSSA and PSSS…GTPP. Residues 1013–1024 show a composition bias toward polar residues; sequence PASQRTGPQNGW. Positions 1056–1074 are enriched in low complexity; the sequence is PGGDPQPQGLQQQPSASGP. Residue T1190 is modified to Phosphothreonine. S1192 carries the phosphoserine modification. Residue K1246 forms a Glycyl lysine isopeptide (Lys-Gly) (interchain with G-Cter in ubiquitin) linkage.

Belongs to the WD repeat SEC31 family. As to quaternary structure, COPII is composed of at least 5 proteins: the SEC23/24 complex, the SEC13/31 complex and SAR1. SEC13 and SEC31 make a 2:2 tetramer that forms the edge element of the COPII outer coat. The tetramer self-assembles in multiple copies to form the complete polyhedral cage. Interacts (via WD 8) with SEC13. Interacts with PDCD6; interaction takes place in response to cytosolic calcium increase and leads to bridge together the BCR(KLHL12) complex and SEC31A, leading to monoubiquitination. Interacts with KLHL12. Monoubiquitinated by the BCR(KLHL12) E3 ubiquitin ligase complex, leading to regulate the size of COPII coats. As to expression, ubiquitously expressed.

The protein localises to the cytoplasm. The protein resides in the cytoplasmic vesicle. It is found in the COPII-coated vesicle membrane. Its subcellular location is the endoplasmic reticulum membrane. In terms of biological role, component of the coat protein complex II (COPII) which promotes the formation of transport vesicles from the endoplasmic reticulum (ER). The coat has two main functions, the physical deformation of the endoplasmic reticulum membrane into vesicles and the selection of cargo molecules. This chain is Protein transport protein Sec31A (Sec31a), found in Rattus norvegicus (Rat).